Consider the following 849-residue polypeptide: Membrane protein-large ribosomal subunit bL9 fusion protein (849 aa).

A unknown region spans residues 1–680; the sequence is MFSKNKHNTK…TQLEGTNIKT (680 aa). The next 2 helical transmembrane spans lie at 11–31 and 64–84; these read FIVIACVIVVLILILFCFDFQ and IIFFIFNFFGKIILASFIISF. In terms of domain architecture, GGDEF spans 214–342; sequence KTLAIAMIAF…GGDQVVVNIE (129 aa). Positions 681–849 are large ribosomal subunit protein bL9; sequence VTDTLKHFLK…FLNVTERKSK (169 aa).

Belongs to the bacterial ribosomal protein bL9 family.

The protein resides in the cell membrane. Functionally, binds to the 23S rRNA. This chain is Membrane protein-large ribosomal subunit bL9 fusion protein, found in Aster yellows witches'-broom phytoplasma (strain AYWB).